The sequence spans 336 residues: MTYSKIQNILPGLGLSVAITAAAMVLEKIEEHYAGRAWLEALVIAILLGTAVRSLARPGPRFNKGINFSAKLLLEIAVALLGASISASAVIEAGSGLIFGIAAVVAVAITLSYGIGRLLKLPHRMAVLVACGNSICGNSAIAAMAPVIGAESEDVAASIAFTAILGVIVVLTLPLLVPLLGLSFTQYGILAGLTVYAVPQVLAATAPVSLLSVQLGTLVKLVRVLMLGPVILVFALISGNKNADVKPGFFQLVPWFIIGFLAMMALHSLHLIPEAILPAIQYASMLLTIISMAALGLGVDIRSVASAGGRVTLTAILSLIALCCISLGLIHMLGVA.

Helical transmembrane passes span 9-26 (ILPGLGLSVAITAAAMVL), 36-55 (RAWLEALVIAILLGTAVRSL), 68-90 (FSAKLLLEIAVALLGASISASAV), 94-116 (GSGLIFGIAAVVAVAITLSYGIG), 128-150 (LVACGNSICGNSAIAAMAPVIGA), 160-182 (AFTAILGVIVVLTLPLLVPLLGL), 189-211 (ILAGLTVYAVPQVLAATAPVSLL), 221-240 (LVRVLMLGPVILVFALISGN), 247-269 (PGFFQLVPWFIIGFLAMMALHSL), 279-301 (AIQYASMLLTIISMAALGLGVDI), and 313-335 (LTAILSLIALCCISLGLIHMLGV).

Belongs to the UPF0324 family.

It is found in the cell membrane. The polypeptide is UPF0324 membrane protein BR0028/BS1330_I0028 (Brucella suis biovar 1 (strain 1330)).